The primary structure comprises 169 residues: Deoxyuridine 5'-triphosphate nucleotidohydrolase (169 aa).

Residues 1-10 (MAENQINSPE) show a composition bias toward polar residues. The segment at 1 to 25 (MAENQINSPEITEPSPKVQKLDHPE) is disordered. Residues 91 to 93 (RSG), 105 to 108 (GVID), Gly-116, Arg-159, and 164 to 165 (FG) each bind substrate.

This sequence belongs to the dUTPase family. In terms of assembly, homodimer. It depends on Mg(2+) as a cofactor. Vegetative and floral merismatic cells and provascular and vascular merismatic derivatives.

It carries out the reaction dUTP + H2O = dUMP + diphosphate + H(+). It functions in the pathway pyrimidine metabolism; dUMP biosynthesis; dUMP from dCTP (dUTP route): step 2/2. Functionally, this enzyme is involved in nucleotide metabolism: it produces dUMP, the immediate precursor of thymidine nucleotides and it decreases the intracellular concentration of dUTP so that uracil cannot be incorporated into DNA. It may have as well a metabolic role in merismatic cells. This is Deoxyuridine 5'-triphosphate nucleotidohydrolase from Solanum lycopersicum (Tomato).